The primary structure comprises 573 residues: SHC-transforming protein 2 (573 aa).

Positions 125–307 (LGPGVSYIVR…TGLEESAWGD (183 aa)) constitute a PID domain. In terms of domain architecture, SH2 spans 478–569 (WYHGRMSRRA…ESELHLRGVV (92 aa)).

Interacts with the Trk receptors in a phosphotyrosine-dependent manner and MEGF12. Once activated, binds to GRB2. In terms of processing, phosphorylated on tyrosine by the Trk receptors.

Its function is as follows. Signaling adapter that couples activated growth factor receptors to signaling pathway in neurons. Involved in the signal transduction pathways of neurotrophin-activated Trk receptors in cortical neurons. In Rattus norvegicus (Rat), this protein is SHC-transforming protein 2 (Shc2).